The chain runs to 473 residues: Photosystem II CP43 reaction center protein (473 aa).

Residues 1-14 (MKTLYSPRRFYPVE) constitute a propeptide that is removed on maturation. An N-acetylthreonine modification is found at T15. Phosphothreonine is present on T15. 5 consecutive transmembrane segments (helical) span residues 69-93 (LFEV…PHLA), 134-155 (LLGP…KDRN), 178-200 (KALY…RKIS), 255-275 (KPFA…LSYS), and 291-312 (WFNN…ASQA). E367 provides a ligand contact to [CaMn4O5] cluster. Residues 447-471 (RARAAAAGFEKGIDRDLEPVLFMTP) form a helical membrane-spanning segment.

Belongs to the PsbB/PsbC family. PsbC subfamily. In terms of assembly, PSII is composed of 1 copy each of membrane proteins PsbA, PsbB, PsbC, PsbD, PsbE, PsbF, PsbH, PsbI, PsbJ, PsbK, PsbL, PsbM, PsbT, PsbX, PsbY, PsbZ, Psb30/Ycf12, at least 3 peripheral proteins of the oxygen-evolving complex and a large number of cofactors. It forms dimeric complexes. Binds multiple chlorophylls and provides some of the ligands for the Ca-4Mn-5O cluster of the oxygen-evolving complex. It may also provide a ligand for a Cl- that is required for oxygen evolution. PSII binds additional chlorophylls, carotenoids and specific lipids. serves as cofactor.

It localises to the plastid. The protein localises to the chloroplast thylakoid membrane. One of the components of the core complex of photosystem II (PSII). It binds chlorophyll and helps catalyze the primary light-induced photochemical processes of PSII. PSII is a light-driven water:plastoquinone oxidoreductase, using light energy to abstract electrons from H(2)O, generating O(2) and a proton gradient subsequently used for ATP formation. The polypeptide is Photosystem II CP43 reaction center protein (Ranunculus macranthus (Large buttercup)).